The following is a 231-amino-acid chain: Fibrillarin-like rRNA/tRNA 2'-O-methyltransferase (231 aa).

S-adenosyl-L-methionine-binding positions include 89–90 (TT), 108–109 (EF), 133–134 (DA), and 153–156 (DIAQ).

This sequence belongs to the methyltransferase superfamily. Fibrillarin family. Interacts with nop5. Component of box C/D small ribonucleoprotein (sRNP) particles that contain rpl7ae, FlpA and nop5, plus a guide RNA.

In terms of biological role, involved in pre-rRNA and tRNA processing. Utilizes the methyl donor S-adenosyl-L-methionine to catalyze the site-specific 2'-hydroxyl methylation of ribose moieties in rRNA and tRNA. Site specificity is provided by a guide RNA that base pairs with the substrate. Methylation occurs at a characteristic distance from the sequence involved in base pairing with the guide RNA. The polypeptide is Fibrillarin-like rRNA/tRNA 2'-O-methyltransferase (Sulfolobus acidocaldarius (strain ATCC 33909 / DSM 639 / JCM 8929 / NBRC 15157 / NCIMB 11770)).